A 189-amino-acid polypeptide reads, in one-letter code: Ras-like protein 1 (189 aa).

10 to 17 (GAGGVGKS) provides a ligand contact to GTP. The Effector region signature appears at 32–40 (YDPTIEDSY). GTP-binding positions include 57–61 (DTAGQ) and 116–119 (NKCD). Cys186 carries the cysteine methyl ester modification. The S-geranylgeranyl cysteine moiety is linked to residue Cys186. A propeptide spans 187 to 189 (KML) (removed in mature form).

It belongs to the small GTPase superfamily. Ras family.

The protein resides in the cell membrane. It catalyses the reaction GTP + H2O = GDP + phosphate + H(+). Its activity is regulated as follows. Alternates between an inactive form bound to GDP and an active form bound to GTP. Activated by a guanine nucleotide-exchange factor (GEF) and inactivated by a GTPase-activating protein (GAP). Its function is as follows. Ras proteins bind GDP/GTP and possess intrinsic GTPase activity. Plays a role in eye development by regulating cell growth, survival of postmitotic ommatidial cells and differentiation of photoreceptor cells. During larval development, mediates Ptth/tor signaling leading to the production of ecdysone, a hormone required for the initiation of metamorphosis. The sequence is that of Ras-like protein 1 from Drosophila grimshawi (Hawaiian fruit fly).